We begin with the raw amino-acid sequence, 594 residues long: Glutamate decarboxylase 1 (594 aa).

Over residues 1–13 the composition is skewed to low complexity; that stretch reads MASSTPSSSATSS. A disordered region spans residues 1–23; that stretch reads MASSTPSSSATSSNAGADPNTTN. S78 carries the post-translational modification Phosphoserine. 4-aminobutanoate is bound at residue 190–192; it reads QLS. K405 is modified (N6-(pyridoxal phosphate)lysine). Residue R567 coordinates 4-aminobutanoate.

It belongs to the group II decarboxylase family. In terms of assembly, homodimer. It depends on pyridoxal 5'-phosphate as a cofactor.

It catalyses the reaction L-glutamate + H(+) = 4-aminobutanoate + CO2. In terms of biological role, catalyzes the synthesis of the inhibitory neurotransmitter gamma-aminobutyric acid (GABA) with pyridoxal 5'-phosphate as cofactor. This Pongo abelii (Sumatran orangutan) protein is Glutamate decarboxylase 1 (GAD1).